The sequence spans 433 residues: G2/mitotic-specific cyclin-B1 (433 aa).

The segment at 19–47 (INMAGAKRVPTAPAATSKPGLRPRTALGD) is disordered. Position 73 is an N6-acetyllysine (Lys73). A disordered region spans residues 93–116 (PVSEPVPEPEPEPEPEPVKEEKLS). Residue Ser126 is modified to Phosphoserine; by CDK1. Ser128 bears the Phosphoserine mark. Ser133 carries the phosphoserine; by PLK1 modification. A Phosphoserine modification is found at Ser147. 2 interaction with CDK2 regions span residues 169-177 (EYVKDIYAY) and 258-261 (YEEM). Position 321 is a phosphothreonine (Thr321).

This sequence belongs to the cyclin family. Cyclin AB subfamily. Interacts with the CDC2 protein kinase to form a serine/threonine kinase holoenzyme complex also known as maturation promoting factor (MPF). The cyclin subunit imparts substrate specificity to the complex. Binds HEI10. Interacts with catalytically active RALBP1 and CDC2 during mitosis to form an endocytotic complex during interphase. Interacts with CCNF; interaction is required for nuclear localization. Interacts with CDK5RAP3. Interacts with RFPL4A and UBE2A. Interacts with INCA1. Ubiquitinated by the SCF(NIPA) complex during interphase, leading to its destruction. Deubiquitinated by USP22 during G2/M phase. Post-translationally, phosphorylated by PLK1 at Ser-133 on centrosomes during prophase: phosphorylation by PLK1 does not cause nuclear import. Phosphorylation at Ser-147 was also reported to be mediated by PLK1 but Ser-133 seems to be the primary phosphorylation site.

It localises to the cytoplasm. It is found in the nucleus. The protein localises to the cytoskeleton. Its subcellular location is the microtubule organizing center. The protein resides in the centrosome. Its function is as follows. Essential for the control of the cell cycle at the G2/M (mitosis) transition. This chain is G2/mitotic-specific cyclin-B1 (CCNB1), found in Homo sapiens (Human).